The sequence spans 86 residues: Small ribosomal subunit protein bS20 (86 aa).

The segment covering 1-11 (MANIKSQIKRN) has biased composition (polar residues). The tract at residues 1–20 (MANIKSQIKRNLTNEKRHQA) is disordered.

Belongs to the bacterial ribosomal protein bS20 family.

Functionally, binds directly to 16S ribosomal RNA. The sequence is that of Small ribosomal subunit protein bS20 from Acholeplasma laidlawii (strain PG-8A).